A 554-amino-acid chain; its full sequence is Suppressor of hairless homolog (554 aa).

The segment at 1–31 (MYHPHHLPAHGQVQSHQHREDAAATSSRDVN) is disordered. DNA-binding regions lie at residues 83 to 90 (KSYGNEKR), 218 to 227 (RLRSQTVSTR), and 291 to 323 (RKVD…ERMY). The 91-residue stretch at 381-471 (PNVHSLQLNG…YPTNLTFTFT (91 aa)) folds into the IPT/TIG domain. The interval 489–554 (GSKRPSASMP…NGANMLRTAS (66 aa)) is disordered. Over residues 508 to 519 (DSGRGNESDRGD) the composition is skewed to basic and acidic residues.

This sequence belongs to the Su(H) family. Interacts with activated Notch proteins.

It localises to the nucleus. Its function is as follows. Transcriptional regulator that plays a central role in Notch signaling, a signaling pathway involved in cell-cell communication that regulates a broad spectrum of cell-fate determinations. Acts as a transcriptional repressor when it is not associated with Notch proteins. When associated with some Notch protein, it acts as a transcriptional activator that activates transcription of Notch target genes. Required for the transcriptional expression of Brachyury, suggesting that it participates in notochord differentiation. This chain is Suppressor of hairless homolog (Su(H)), found in Ciona intestinalis (Transparent sea squirt).